The sequence spans 177 residues: Transcription antitermination protein NusB (177 aa).

The segment at 1–35 (MTDSANPTPSARPPRQPRTGTTGTGARKAGSKSGR) is disordered. Residues 17–28 (PRTGTTGTGARK) are compositionally biased toward low complexity.

This sequence belongs to the NusB family.

In terms of biological role, involved in transcription antitermination. Required for transcription of ribosomal RNA (rRNA) genes. Binds specifically to the boxA antiterminator sequence of the ribosomal RNA (rrn) operons. This chain is Transcription antitermination protein NusB, found in Acidovorax ebreus (strain TPSY) (Diaphorobacter sp. (strain TPSY)).